The chain runs to 187 residues: UPF0301 protein LPC_2717 (187 aa).

The protein belongs to the UPF0301 (AlgH) family.

This Legionella pneumophila (strain Corby) protein is UPF0301 protein LPC_2717.